Consider the following 261-residue polypeptide: Endonuclease NucS (261 aa).

It belongs to the NucS endonuclease family.

The protein localises to the cytoplasm. Functionally, cleaves both 3' and 5' ssDNA extremities of branched DNA structures. The chain is Endonuclease NucS from Aeropyrum pernix (strain ATCC 700893 / DSM 11879 / JCM 9820 / NBRC 100138 / K1).